Here is a 578-residue protein sequence, read N- to C-terminus: Proline--tRNA ligase (578 aa).

Belongs to the class-II aminoacyl-tRNA synthetase family. ProS type 1 subfamily. In terms of assembly, homodimer.

It is found in the cytoplasm. It catalyses the reaction tRNA(Pro) + L-proline + ATP = L-prolyl-tRNA(Pro) + AMP + diphosphate. In terms of biological role, catalyzes the attachment of proline to tRNA(Pro) in a two-step reaction: proline is first activated by ATP to form Pro-AMP and then transferred to the acceptor end of tRNA(Pro). As ProRS can inadvertently accommodate and process non-cognate amino acids such as alanine and cysteine, to avoid such errors it has two additional distinct editing activities against alanine. One activity is designated as 'pretransfer' editing and involves the tRNA(Pro)-independent hydrolysis of activated Ala-AMP. The other activity is designated 'posttransfer' editing and involves deacylation of mischarged Ala-tRNA(Pro). The misacylated Cys-tRNA(Pro) is not edited by ProRS. The chain is Proline--tRNA ligase from Burkholderia orbicola (strain AU 1054).